A 355-amino-acid chain; its full sequence is 3-dehydroquinate synthase (355 aa).

NAD(+) is bound by residues 67–72, 101–105, 125–126, Lys138, Lys147, and 165–168; these read DGEIYK, GVIGD, TT, and FLNT. Glu180, His243, and His260 together coordinate Zn(2+).

This sequence belongs to the sugar phosphate cyclases superfamily. Dehydroquinate synthase family. The cofactor is NAD(+). It depends on Co(2+) as a cofactor. Requires Zn(2+) as cofactor.

It is found in the cytoplasm. It carries out the reaction 7-phospho-2-dehydro-3-deoxy-D-arabino-heptonate = 3-dehydroquinate + phosphate. It participates in metabolic intermediate biosynthesis; chorismate biosynthesis; chorismate from D-erythrose 4-phosphate and phosphoenolpyruvate: step 2/7. In terms of biological role, catalyzes the conversion of 3-deoxy-D-arabino-heptulosonate 7-phosphate (DAHP) to dehydroquinate (DHQ). This chain is 3-dehydroquinate synthase, found in Buchnera aphidicola subsp. Baizongia pistaciae (strain Bp).